The primary structure comprises 433 residues: uncharacterized protein (433 aa).

The interval 1-126 (MAAHIALIAH…VIKLLGKTKT (126 aa)) is methylglyoxal synthase. One can recognise an MGS-like domain in the interval 1–145 (MAAHIALIAH…GQGNVERELD (145 aa)). Asp-62 is an active-site residue. A DAGKc domain is found at 127–262 (GHLIFNPVAG…VDTALCNDIP (136 aa)).

In the N-terminal section; belongs to the methylglyoxal synthase family.

This is an uncharacterized protein from Synechocystis sp. (strain ATCC 27184 / PCC 6803 / Kazusa).